A 509-amino-acid polypeptide reads, in one-letter code: BPI fold-containing family C protein (509 aa).

A signal peptide spans Met-1–Ser-23. Asn-63, Asn-79, Asn-92, Asn-113, and Asn-117 each carry an N-linked (GlcNAc...) asparagine glycan. Cysteines 161 and 202 form a disulfide. N-linked (GlcNAc...) asparagine glycans are attached at residues Asn-215, Asn-227, Asn-357, Asn-374, and Asn-457.

It belongs to the BPI/LBP/Plunc superfamily. BPI/LBP family.

The protein resides in the secreted. The chain is BPI fold-containing family C protein (Bpifc) from Mus musculus (Mouse).